The sequence spans 615 residues: Homologous recombination OB-fold protein (615 aa).

Disordered regions lie at residues 42–75 (LRPV…PRLC), 213–326 (PWPS…PVTQ), and 546–590 (DFLE…FPEE). At Ser47 the chain carries Phosphoserine. Polar residues-rich tracts occupy residues 47-71 (SRPQ…NQSV), 232-241 (SCVSTSQQRG), and 257-275 (IRSS…SPRA). Low complexity predominate over residues 302–317 (SSRAPVSSVESPVSTP).

Interacts with MCM8; this interaction is necessary for MCM8-MCM9 helicase complex recruitment to DNA damage sites. Interacts with RPA1; this interaction associates HROB with the RPA complex.

It localises to the nucleus. Its subcellular location is the chromosome. In terms of biological role, DNA-binding protein involved in homologous recombination that acts by recruiting the MCM8-MCM9 helicase complex to sites of DNA damage to promote DNA repair synthesis. This is Homologous recombination OB-fold protein from Mus musculus (Mouse).